A 315-amino-acid chain; its full sequence is GPN-loop GTPase 2 (315 aa).

12 to 17 (GSGKST) serves as a coordination point for GTP. The Gly-Pro-Asn (GPN)-loop; involved in dimer interface signature appears at 69-71 (GPN). GTP is bound at residue 172–175 (SKAD).

Belongs to the GPN-loop GTPase family. Heterodimers with gpn1 or fet5/gpn3. Binds to RNA polymerase II (RNAPII).

Its subcellular location is the cytoplasm. The protein resides in the nucleus. Small GTPase required for proper nuclear import of RNA polymerase II and III (RNAPII and RNAPIII). May act at an RNAP assembly step prior to nuclear import. This Schizosaccharomyces pombe (strain 972 / ATCC 24843) (Fission yeast) protein is GPN-loop GTPase 2.